We begin with the raw amino-acid sequence, 75 residues long: Metallothionein-like protein 1 (75 aa).

This sequence belongs to the metallothionein superfamily. Type 15 family.

Metallothioneins have a high content of cysteine residues that bind various heavy metals. The sequence is that of Metallothionein-like protein 1 (ALI1) from Triticum aestivum (Wheat).